The following is a 301-amino-acid chain: Immune-associated nucleotide-binding protein 5 (301 aa).

In terms of domain architecture, AIG1-type G spans Glu11 to Lys214. The segment at Gly20–Ser27 is G1. Gly20–Ser28 contributes to the GTP binding site. The interval Cys46–Lys50 is G2. The tract at residues Asp63–Gly66 is G3. The G4 stretch occupies residues Thr133–Asp136. Residues Asn172–Lys174 are G5. Asn173 is a GTP binding site.

The protein belongs to the TRAFAC class TrmE-Era-EngA-EngB-Septin-like GTPase superfamily. AIG1/Toc34/Toc159-like paraseptin GTPase family. IAN subfamily. As to expression, expressed in pollen, cotyledons and lateral roots.

The protein is Immune-associated nucleotide-binding protein 5 of Arabidopsis thaliana (Mouse-ear cress).